Here is a 395-residue protein sequence, read N- to C-terminus: Phosphoglycerate kinase (395 aa).

Substrate is bound by residues 21–23, R36, 59–62, R120, and R153; these read DFN and HLGR. ATP is bound by residues K203, E325, and 351-354; that span reads GGDS.

This sequence belongs to the phosphoglycerate kinase family. As to quaternary structure, monomer.

It localises to the cytoplasm. It catalyses the reaction (2R)-3-phosphoglycerate + ATP = (2R)-3-phospho-glyceroyl phosphate + ADP. It participates in carbohydrate degradation; glycolysis; pyruvate from D-glyceraldehyde 3-phosphate: step 2/5. The protein is Phosphoglycerate kinase of Roseiflexus sp. (strain RS-1).